A 192-amino-acid polypeptide reads, in one-letter code: Ribosomal RNA small subunit methyltransferase G (192 aa).

Residues Gly59, 111-112 (IE), and Arg124 contribute to the S-adenosyl-L-methionine site.

It belongs to the methyltransferase superfamily. RNA methyltransferase RsmG family.

The protein localises to the cytoplasm. In terms of biological role, specifically methylates the N7 position of a guanine in 16S rRNA. The chain is Ribosomal RNA small subunit methyltransferase G from Mycoplasma genitalium (strain ATCC 33530 / DSM 19775 / NCTC 10195 / G37) (Mycoplasmoides genitalium).